The following is a 299-amino-acid chain: Cancer/testis antigen family 47 member B1 (299 aa).

Positions 1-10 (MSATGDRHPT) are enriched in basic and acidic residues. Disordered stretches follow at residues 1–102 (MSAT…EGNE) and 215–299 (AREP…SKGT). Composition is skewed to low complexity over residues 20–31 (QEGAQAEAAGAG) and 46–60 (VPAA…PVEG). Residues 81–101 (AEEDSDIGPATEEEEEEEEGN) show a composition bias toward acidic residues. Residues 215–238 (AREPAEEAADEKPPEEAAEEKLTE) are compositionally biased toward basic and acidic residues. Acidic residues-rich tracts occupy residues 239–251 (EATE…EPTS) and 268–281 (WDEE…EEEK). Positions 270–298 (EEAQDAAGEEEKEQEKEKDVENKVKNSKG) form a coiled coil. The span at 282–293 (EQEKEKDVENKV) shows a compositional bias: basic and acidic residues.

The protein belongs to the CT47 family.

The chain is Cancer/testis antigen family 47 member B1 from Homo sapiens (Human).